Reading from the N-terminus, the 75-residue chain is Tautomerase PptA (75 aa).

P2 (proton acceptor; via imino nitrogen) is an active-site residue.

This sequence belongs to the 4-oxalocrotonate tautomerase family. PptA subfamily. As to quaternary structure, homodimer.

It localises to the cytoplasm. This Shigella sonnei (strain Ss046) protein is Tautomerase PptA.